Reading from the N-terminus, the 195-residue chain is BAG family molecular chaperone regulator 1A (195 aa).

Positions 6–72 (STVTIHYGNQ…KLGLKNHSKI (67 aa)) constitute a Ubiquitin-like domain. Residues 78–98 (HKQQRGSKEKDTVEPAPKAEA) are disordered. The span at 83 to 98 (GSKEKDTVEPAPKAEA) shows a compositional bias: basic and acidic residues. The BAG domain maps to 109–190 (EIKAIDQYVD…KMLDHVDQTS (82 aa)).

Binds to the ATPase domain of HSP70/HSC chaperones.

Its function is as follows. Inhibits the chaperone activity of HSP70/HSC70 by promoting substrate release. This Schizosaccharomyces pombe (strain 972 / ATCC 24843) (Fission yeast) protein is BAG family molecular chaperone regulator 1A (bag101).